The primary structure comprises 178 residues: Adenine phosphoribosyltransferase (178 aa).

It belongs to the purine/pyrimidine phosphoribosyltransferase family. As to quaternary structure, homodimer.

It localises to the cytoplasm. It catalyses the reaction AMP + diphosphate = 5-phospho-alpha-D-ribose 1-diphosphate + adenine. The protein operates within purine metabolism; AMP biosynthesis via salvage pathway; AMP from adenine: step 1/1. Functionally, catalyzes a salvage reaction resulting in the formation of AMP, that is energically less costly than de novo synthesis. The polypeptide is Adenine phosphoribosyltransferase (Bacteroides fragilis (strain YCH46)).